A 411-amino-acid polypeptide reads, in one-letter code: Multifunctional CCA protein (411 aa).

The ATP site is built by glycine 8 and arginine 11. 2 residues coordinate CTP: glycine 8 and arginine 11. Residues aspartate 21 and aspartate 23 each contribute to the Mg(2+) site. ATP contacts are provided by arginine 91, arginine 137, and arginine 140. CTP contacts are provided by arginine 91, arginine 137, and arginine 140. Residues 228–329 (CGIHTLMVAK…VNILDQIDSW (102 aa)) form the HD domain.

This sequence belongs to the tRNA nucleotidyltransferase/poly(A) polymerase family. Bacterial CCA-adding enzyme type 1 subfamily. In terms of assembly, monomer. Can also form homodimers and oligomers. The cofactor is Mg(2+). Ni(2+) is required as a cofactor.

It carries out the reaction a tRNA precursor + 2 CTP + ATP = a tRNA with a 3' CCA end + 3 diphosphate. The enzyme catalyses a tRNA with a 3' CCA end + 2 CTP + ATP = a tRNA with a 3' CCACCA end + 3 diphosphate. Catalyzes the addition and repair of the essential 3'-terminal CCA sequence in tRNAs without using a nucleic acid template. Adds these three nucleotides in the order of C, C, and A to the tRNA nucleotide-73, using CTP and ATP as substrates and producing inorganic pyrophosphate. tRNA 3'-terminal CCA addition is required both for tRNA processing and repair. Also involved in tRNA surveillance by mediating tandem CCA addition to generate a CCACCA at the 3' terminus of unstable tRNAs. While stable tRNAs receive only 3'-terminal CCA, unstable tRNAs are marked with CCACCA and rapidly degraded. The polypeptide is Multifunctional CCA protein (Photobacterium profundum (strain SS9)).